Here is a 148-residue protein sequence, read N- to C-terminus: MVARHFSFFLALLILYDLIPSNQGVEINPTIIKQVRKLRMRCLNQTGASVDVIDKSVKNRILPTDPEIKCFLYCMFDMFGLIDSQNIMHLEALLEVLPEEIHKTINGLVSSCGTQKGKDGCDTAYETVKCYIAVNGKFIWEEIIVLLG.

The N-terminal stretch at 1-23 (MVARHFSFFLALLILYDLIPSNQ) is a signal peptide. Intrachain disulfides connect cysteine 42–cysteine 74, cysteine 70–cysteine 121, and cysteine 112–cysteine 130.

This sequence belongs to the PBP/GOBP family. As to expression, expressed in the antenna, mostly on the anterior surface of the third antennal segment. Expressed in auxiliary cells and the third antennal segment and exported to the sensillar lymph (at protein level).

The protein resides in the secreted. Odorant-binding protein required for olfactory behavior and activity of pheromone-sensitive neurons in response to the male-specific pheromone cis-vaccenyl acetate (cVA). Modulates social responsivity differently in males and females, regulating male aggression and female receptivity respectively. The protein is General odorant-binding protein 69a (Obp69a) of Drosophila melanogaster (Fruit fly).